Consider the following 287-residue polypeptide: Putative DNA-3-methyladenine glycosylase YfjP (287 aa).

Asp242 acts as the Proton acceptor in catalysis.

It belongs to the alkylbase DNA glycosidase AlkA family.

The enzyme catalyses Hydrolysis of alkylated DNA, releasing 3-methyladenine, 3-methylguanine, 7-methylguanine and 7-methyladenine.. Its function is as follows. Hydrolysis of the deoxyribose N-glycosidic bond to excise 3-methyladenine, 3-methylguanine, 7-methylguanine, O2-methylthymine, and O2-methylcytosine from the damaged DNA polymer formed by alkylation lesions. The protein is Putative DNA-3-methyladenine glycosylase YfjP (yfjP) of Bacillus subtilis (strain 168).